The chain runs to 426 residues: tRNA(Ile)-lysidine synthase (426 aa).

Position 27–32 (27–32 (SGGADS)) interacts with ATP.

This sequence belongs to the tRNA(Ile)-lysidine synthase family.

It is found in the cytoplasm. It carries out the reaction cytidine(34) in tRNA(Ile2) + L-lysine + ATP = lysidine(34) in tRNA(Ile2) + AMP + diphosphate + H(+). Its function is as follows. Ligates lysine onto the cytidine present at position 34 of the AUA codon-specific tRNA(Ile) that contains the anticodon CAU, in an ATP-dependent manner. Cytidine is converted to lysidine, thus changing the amino acid specificity of the tRNA from methionine to isoleucine. The sequence is that of tRNA(Ile)-lysidine synthase from Bacteroides thetaiotaomicron (strain ATCC 29148 / DSM 2079 / JCM 5827 / CCUG 10774 / NCTC 10582 / VPI-5482 / E50).